The following is a 256-amino-acid chain: METYVNKLHEGSTYTAAVQYNVLEKDDDPASLTIWVPMFQSSISADLLIKELINVNILVRQISTLKGPSLKIMINSRSAVLAQMPNKFTISANVSLDERSKLAYDITTPCEIKACSLTCLKVKNMLTTVKDLTMKTFNPTHEIIALCEFENIMTSKKVVIPTFLRSINVKAKDLDSLENIATTEFKNAITNAKIIPYAGLVLVITVTDNKGAFKYIKPQSQFIVDLGAYLEKESIYYVTTNWKHTATRFSIKPIED.

It belongs to the pneumovirinae M protein family. Forms dimers. Forms higher-order oligomers. Interacts with glycoprotein G (via N-terminus). Interacts with protein M2-1; this interaction directs the matrix protein localization to cytoplasmic inclusions comprising viral proteins L, N, P, and M2-1 and mediates the matrix protein association with the nucleocapsid.

Its subcellular location is the virion. It localises to the host cytoplasm. The protein localises to the host nucleus. It is found in the host cell membrane. In terms of biological role, plays a crucial role in virus assembly into filaments and budding. Early in infection, localizes in the nucleus where it may inhibit host cell transcription. Later in infection, traffics to the cytoplasm to associate with inclusion bodies, the site of viral transcription and replication. During virus assembly and budding, acts as a bridge between the nucleocapsid and the lipid bilayer. The protein is Matrix protein (M) of Ovine respiratory syncytial virus (strain WSU 83-1578) (ORSV).